Here is an 87-residue protein sequence, read N- to C-terminus: uncharacterized protein (87 aa).

The 84-residue stretch at 4–87 (SKIIILNNNK…TISGSILIKI (84 aa)) folds into the 2Fe-2S ferredoxin-type domain. Cys39, Cys44, Cys47, and Cys75 together coordinate [2Fe-2S] cluster.

The cofactor is [2Fe-2S] cluster.

This is an uncharacterized protein from Buchnera aphidicola subsp. Baizongia pistaciae (strain Bp).